Consider the following 515-residue polypeptide: Phospholipase A1-Igamma1, chloroplastic (515 aa).

The N-terminal 44 residues, 1–44, are a transit peptide targeting the chloroplast; it reads MATIPSHNLRPHTTNQRTQYSLSFRPHFSRSTLITFPARSSPAR. The short motif at 301–305 is the GXSXG element; it reads GHSLG. Ser303 functions as the Acyl-ester intermediate in the catalytic mechanism. Catalysis depends on charge relay system residues Asp366 and His422.

It belongs to the AB hydrolase superfamily. Lipase family. Ubiquitous. Highly expressed in leaves.

The protein resides in the plastid. It is found in the chloroplast. It carries out the reaction 1,2-dihexadecanoyl-sn-glycero-3-phosphocholine + H2O = 2-hexadecanoyl-sn-glycero-3-phosphocholine + hexadecanoate + H(+). It catalyses the reaction a 1,2-diacyl-3-O-(beta-D-galactosyl)-sn-glycerol + H2O = an acyl-3-O-(beta-D-galactosyl)-sn-glycerol + a fatty acid + H(+). The catalysed reaction is a 1,2-diacyl-3-O-[alpha-D-galactosyl-(1-&gt;6)-beta-D-galactosyl]-sn-glycerol + H2O = acyl-3-O-[alpha-D-galactosyl-(1-&gt;6)-beta-D-galactosyl]-sn-glycerol + a fatty acid + H(+). Its function is as follows. Acylhydrolase with a broad specificity. Catalyzes the hydrolysis of phosphatidylcholine at the sn-1 position. Moderate activity toward phosphatidylcholine (PC), monogalactosyldiacylglycerol (MGDG), digalactosyldiacylglycerol (DGDG) and triacylglycerol (TAG). May display dual sn-1/sn-2 substrate specificity. Could be involved in early wound response. This is Phospholipase A1-Igamma1, chloroplastic from Arabidopsis thaliana (Mouse-ear cress).